Reading from the N-terminus, the 527-residue chain is D-3-phosphoglycerate dehydrogenase (527 aa).

NAD(+) is bound by residues 149–150 (RV), D169, 228–230 (AAR), and D254. R230 is an active-site residue. The active site involves E259. H278 functions as the Proton donor in the catalytic mechanism. 278–281 (HIAA) is a binding site for NAD(+). The 75-residue stretch at 453 to 527 (YIISLHEDKP…GIIDATYVEL (75 aa)) folds into the ACT domain.

Belongs to the D-isomer specific 2-hydroxyacid dehydrogenase family.

It catalyses the reaction (2R)-3-phosphoglycerate + NAD(+) = 3-phosphooxypyruvate + NADH + H(+). It functions in the pathway amino-acid biosynthesis; L-serine biosynthesis; L-serine from 3-phospho-D-glycerate: step 1/3. The chain is D-3-phosphoglycerate dehydrogenase (serA) from Archaeoglobus fulgidus (strain ATCC 49558 / DSM 4304 / JCM 9628 / NBRC 100126 / VC-16).